A 156-amino-acid polypeptide reads, in one-letter code: ATP synthase subunit b (156 aa).

Residues 4-26 (GATFWGPMISFALFVWFTMKYVW) traverse the membrane as a helical segment.

Belongs to the ATPase B chain family. F-type ATPases have 2 components, F(1) - the catalytic core - and F(0) - the membrane proton channel. F(1) has five subunits: alpha(3), beta(3), gamma(1), delta(1), epsilon(1). F(0) has three main subunits: a(1), b(2) and c(10-14). The alpha and beta chains form an alternating ring which encloses part of the gamma chain. F(1) is attached to F(0) by a central stalk formed by the gamma and epsilon chains, while a peripheral stalk is formed by the delta and b chains.

The protein resides in the cell inner membrane. Its function is as follows. F(1)F(0) ATP synthase produces ATP from ADP in the presence of a proton or sodium gradient. F-type ATPases consist of two structural domains, F(1) containing the extramembraneous catalytic core and F(0) containing the membrane proton channel, linked together by a central stalk and a peripheral stalk. During catalysis, ATP synthesis in the catalytic domain of F(1) is coupled via a rotary mechanism of the central stalk subunits to proton translocation. Component of the F(0) channel, it forms part of the peripheral stalk, linking F(1) to F(0). This is ATP synthase subunit b from Alkalilimnicola ehrlichii (strain ATCC BAA-1101 / DSM 17681 / MLHE-1).